Here is a 146-residue protein sequence, read N- to C-terminus: ATP synthase epsilon chain (146 aa).

The protein belongs to the ATPase epsilon chain family. In terms of assembly, F-type ATPases have 2 components, CF(1) - the catalytic core - and CF(0) - the membrane proton channel. CF(1) has five subunits: alpha(3), beta(3), gamma(1), delta(1), epsilon(1). CF(0) has three main subunits: a, b and c.

It localises to the cell membrane. Produces ATP from ADP in the presence of a proton gradient across the membrane. The protein is ATP synthase epsilon chain of Lactobacillus delbrueckii subsp. bulgaricus (strain ATCC 11842 / DSM 20081 / BCRC 10696 / JCM 1002 / NBRC 13953 / NCIMB 11778 / NCTC 12712 / WDCM 00102 / Lb 14).